The primary structure comprises 178 residues: MHSSALLCCLVFLTGVRASPGQGTQSENSCTHFPGSLPHMLRELRVAFSRVKTFFQKKDQLDSMLLKESLLEDFKGYLGCQALSEMIQFYLEEVMPQAENHDPDIKEHVNSLGEKLKTFRLRLRRCHRFLPCENKSKAVVQVKNAVSKLQEKGIYKAMSEFDIFIDYIEAYMTMKAQN.

A signal peptide spans 1 to 18 (MHSSALLCCLVFLTGVRA). Intrachain disulfides connect Cys30/Cys126 and Cys80/Cys132. An N-linked (GlcNAc...) asparagine glycan is attached at Asn134.

Belongs to the IL-10 family. In terms of assembly, homodimer. Interacts with IL10RA and IL10RB.

The protein localises to the secreted. In terms of biological role, major immune regulatory cytokine that acts on many cells of the immune system where it has profound anti-inflammatory functions, limiting excessive tissue disruption caused by inflammation. Mechanistically, IL10 binds to its heterotetrameric receptor comprising IL10RA and IL10RB leading to JAK1 and STAT2-mediated phosphorylation of STAT3. In turn, STAT3 translocates to the nucleus where it drives expression of anti-inflammatory mediators. Targets antigen-presenting cells (APCs) such as macrophages and monocytes and inhibits their release of pro-inflammatory cytokines including granulocyte-macrophage colony-stimulating factor /GM-CSF, granulocyte colony-stimulating factor/G-CSF, IL-1 alpha, IL-1 beta, IL-6, IL-8 and TNF-alpha. Also interferes with antigen presentation by reducing the expression of MHC-class II and co-stimulatory molecules, thereby inhibiting their ability to induce T cell activation. In addition, controls the inflammatory response of macrophages by reprogramming essential metabolic pathways including mTOR signaling. This chain is Interleukin-10 (IL10), found in Callithrix jacchus (White-tufted-ear marmoset).